The primary structure comprises 97 residues: uncharacterized protein (97 aa).

2 disordered regions span residues 1-20 and 52-97; these read MTEG…IASD and VPAA…GRRA.

This is an uncharacterized protein from Paracoccus pantotrophus (Thiosphaera pantotropha).